A 392-amino-acid polypeptide reads, in one-letter code: Early estrogen-induced gene 1 protein (392 aa).

The C2 NT-type domain maps to 2–145; sequence AFLMKKKKFK…ILKVTIGMFL (144 aa). The tract at residues 129–138 is required for interaction with TNFRSF11A/RANK; that stretch reads NTRQDNSILK. The disordered stretch occupies residues 173–324; sequence LTCKGGGTSS…RKKDSVESHP (152 aa). The segment covering 183 to 194 has biased composition (low complexity); that stretch reads GGSSSTNSLTGS. The span at 228–255 shows a compositional bias: polar residues; it reads SRNSSYASQQSKLSGYSTEHSRSSSLSD. A compositionally biased stretch (low complexity) spans 262 to 273; that stretch reads TSTSSSASGGLS. 2 stretches are compositionally biased toward basic and acidic residues: residues 281-300 and 307-324; these read GMEREHRPSEKPPRPPEKPP and HLSDRSFRRKKDSVESHP.

It belongs to the EEIG family. As to quaternary structure, part of a complex composed of EEIG1, TNFRSF11A/RANK, PLCG2, GAB2, TEC and BTK; complex formation increases in the presence of TNFSF11/RANKL. Interacts with PRDM1/BLIMP1; following TNFSF11/RANKL stimulation in bone marrow-derived macrophages, the interaction promotes the binding of PRDM1/BLIMP1 to the gene promoter of IRF8. Interacts (via N-terminus) with TNFRSF11A/RANK (via cytoplasmic domain); when in the presence of TNFSF11/RANKL. In terms of tissue distribution, expressed during TNFSF11/RANKL-induced differentiation of bone marrow-derived macrophages to osteoclasts.

Its subcellular location is the nucleus. The protein localises to the cytoplasm. The protein resides in the membrane raft. In terms of biological role, key component of TNFSF11/RANKL- and TNF-induced osteoclastogenesis pathways, thereby mediates bone resorption in pathological bone loss conditions. Required for TNFSF11/RANKL-induced osteoclastogenesis via its interaction with TNFRSF11A/RANK, thereby facilitates the downsteam transcription of NFATC1 and activation of PLCG2. Facilitates recruitment of the transcriptional repressor PRDM1/BLIMP1 to the promoter of the anti-osteoclastogenesis gene IRF8, thereby resulting in transcription of osteoclast differentiation factors. May play a role in estrogen action. The sequence is that of Early estrogen-induced gene 1 protein (Eeig1) from Mus musculus (Mouse).